Consider the following 400-residue polypeptide: Enoyl-[acyl-carrier-protein] reductase [NADH] (400 aa).

NAD(+)-binding positions include Gly48–Tyr53, Phe74–Glu75, Asp111–Ala112, and Leu139–Ala140. Tyr225 serves as a coordination point for substrate. The active-site Proton donor is Tyr235. Residues Lys244 and Val273 to Thr275 contribute to the NAD(+) site.

The protein belongs to the TER reductase family. Monomer.

It carries out the reaction a 2,3-saturated acyl-[ACP] + NAD(+) = a (2E)-enoyl-[ACP] + NADH + H(+). It participates in lipid metabolism; fatty acid biosynthesis. In terms of biological role, involved in the final reduction of the elongation cycle of fatty acid synthesis (FAS II). Catalyzes the reduction of a carbon-carbon double bond in an enoyl moiety that is covalently linked to an acyl carrier protein (ACP). The chain is Enoyl-[acyl-carrier-protein] reductase [NADH] from Burkholderia multivorans (strain ATCC 17616 / 249).